The following is a 540-amino-acid chain: MNTLPEHSCDVLIIGSGAAGLSLALRLADQHQVIVLSKGPVTEGSTFYAQGGIAAVFDETDSIDSHVEDTLIAGAGICDRHAVEFVASNARSCVQWLIDQGVLFDTHIQPNGEESYHLTREGGHSHRRILHAADATGREVETTLVSKALNHPNIRVLERSNAVDLIVSDKIGLPGTRRVVGAWVWNRNKETVETCHAKAVVLATGGASKVYQYTTNPDISSGDGIAMAWRAGCRVANLEFNQFHPTALYHPQARNFLLTEALRGEGAYLKRPDGTRFMPDFDERGELAPRDIVARAIDHEMKRLGADCMFLDISHKPADFIRQHFPMIYEKLLGLGIDLTQEPVPIVPAAHYTCGGVMVDDHGRTDVEGLYAIGEVSYTGLHGANRMASNSLLECLVYGWSAAEDITRRMPYAHDISTLPPWDESRVENPDERVVIQHNWHELRLFMWDYVGIVRTTKRLERALRRITMLQQEIDEYYAHFRVSNNLLELRNLVQVAELIVRCAMMRKESRGLHFTLDYPELLTHSGPSILSPGNHYINR.

FAD-binding positions include 16-19 (SGAA), K38, 45-52 (STFYAQGG), 161-162 (NA), and D223. Succinate-binding positions include H244 and 259-260 (TE). The active-site Proton donor/acceptor is R290. Position 375 (E375) interacts with FAD. S389 is a succinate binding site. An FAD-binding site is contributed by 391–392 (SL).

The protein belongs to the FAD-dependent oxidoreductase 2 family. NadB subfamily. As to quaternary structure, monomer. Homodimer. Both the monomeric and dimeric forms of the enzyme are catalytically active. It depends on FAD as a cofactor.

The protein localises to the cytoplasm. The enzyme catalyses L-aspartate + O2 = iminosuccinate + H2O2. The catalysed reaction is fumarate + L-aspartate = iminosuccinate + succinate. It participates in cofactor biosynthesis; NAD(+) biosynthesis; iminoaspartate from L-aspartate (oxidase route): step 1/1. Its activity is regulated as follows. Inhibited by the product iminoaspartate. Competitively inhibited by mesotartrate. NAD acts as a competitive inhibitor to FAD. Inhibited by iodoacetic acid, diethylpyrocarbonate and tetranitromethane. Its function is as follows. Catalyzes the oxidation of L-aspartate to iminoaspartate, the first step in the de novo biosynthesis of NAD(+). Can use either oxygen or fumarate as electron acceptors, which allows the enzyme to be functional under aerobic and anaerobic conditions. In vivo, fumarate is used under anaerobic conditions, and oxygen is the predominant electron acceptor under aerobic conditions due to the lower fumarate levels. In vitro, fumarate is a more efficient electron acceptor and is kinetically superior to oxygen. This is L-aspartate oxidase from Escherichia coli (strain K12).